A 277-amino-acid chain; its full sequence is Urease accessory protein UreD (277 aa).

Belongs to the UreD family. As to quaternary structure, ureD, UreF and UreG form a complex that acts as a GTP-hydrolysis-dependent molecular chaperone, activating the urease apoprotein by helping to assemble the nickel containing metallocenter of UreC. The UreE protein probably delivers the nickel.

It localises to the cytoplasm. Functionally, required for maturation of urease via the functional incorporation of the urease nickel metallocenter. This chain is Urease accessory protein UreD, found in Yersinia pestis (strain Pestoides F).